We begin with the raw amino-acid sequence, 190 residues long: Frizzled-6 (190 aa).

An FZ domain is found at 1–20 (FGFAWPEELECSRLVNCDET). Topologically, residues 1 to 89 (FGFAWPEELE…NYELDVAKSF (89 aa)) are extracellular. The helical transmembrane segment at 90-110 (IGIVSIFCLCATLFTFLTFLI) threads the bilayer. Residues 111-121 (DVKRFRYPERP) lie on the Cytoplasmic side of the membrane. A helical transmembrane segment spans residues 122-142 (IIYYSVCYSIVSLMYFIGFLL). Over 143 to 169 (GNRTACNKADDKLEIGETVVLGSQNKA) the chain is Extracellular. N-linked (GlcNAc...) asparagine glycosylation occurs at Asn-144. The chain crosses the membrane as a helical span at residues 170 to 190 (CTVLFMVLYFFTMAGTIWWVI).

Belongs to the G-protein coupled receptor Fz/Smo family.

Its subcellular location is the membrane. It localises to the cell membrane. The protein localises to the cell surface. It is found in the apical cell membrane. The protein resides in the cytoplasmic vesicle membrane. Functionally, receptor for Wnt proteins. Most of frizzled receptors are coupled to the beta-catenin canonical signaling pathway, which leads to the activation of disheveled proteins, inhibition of GSK-3 kinase, nuclear accumulation of beta-catenin and activation of Wnt target genes. A second signaling pathway involving PKC and calcium fluxes has been seen for some family members, but it is not yet clear if it represents a distinct pathway or if it can be integrated in the canonical pathway, as PKC seems to be required for Wnt-mediated inactivation of GSK-3 kinase. Both pathways seem to involve interactions with G-proteins. Activation by Wnt5A stimulates PKC activity via a G-protein-dependent mechanism. Involved in transduction and intercellular transmission of polarity information during tissue morphogenesis and/or in differentiated tissues. Together with FZD3, may be involved in the neural tube closure and plays a role in the regulation of the establishment of planar cell polarity (PCP), particularly in the orientation of asymmetric bundles of stereocilia on the apical faces of a subset of auditory and vestibular sensory cells located in the inner ear. This chain is Frizzled-6 (FZD6), found in Gallus gallus (Chicken).